The following is a 291-amino-acid chain: Lipase (291 aa).

The signal sequence occupies residues 1 to 17; that stretch reads MRSSLVLFFVSAWTALA. The propeptide occupies 18-22; sequence SPIRR. 3 cysteine pairs are disulfide-bonded: Cys-44–Cys-290, Cys-58–Cys-63, and Cys-126–Cys-129. Catalysis depends on Ser-168, which acts as the Nucleophile. Catalysis depends on charge relay system residues Asp-223 and His-280.

Belongs to the AB hydrolase superfamily. Lipase family.

It carries out the reaction a triacylglycerol + H2O = a diacylglycerol + a fatty acid + H(+). This chain is Lipase (LIP), found in Thermomyces lanuginosus (Humicola lanuginosa).